The primary structure comprises 763 residues: DNA-binding protein SATB1 (763 aa).

Over residues 1 to 15 (MDHLNEATQGKEHSE) the composition is skewed to basic and acidic residues. A disordered region spans residues 1 to 54 (MDHLNEATQGKEHSEMSNNVSDPKGPPAKIARLEQNGSPLGRGRLGSTGAKMQG). The Nuclear localization signal signature appears at 20–40 (VSDPKGPPAKIARLEQNGSPL). Lysine 51 is covalently cross-linked (Glycyl lysine isopeptide (Lys-Gly) (interchain with G-Cter in SUMO2)). Positions 71–172 (GTMLPVFCVV…VVTLKIQLHS (102 aa)) constitute a CMP domain. Lysine 136 carries the post-translational modification N6-acetyllysine. The Protein interaction motif lies at 139–143 (PVPLS). One can recognise a CUTL domain in the interval 175 to 248 (KLEDLPPEQW…WYKHFKKTKD (74 aa)). Serine 185 bears the Phosphoserine mark. A nuclear matrix targeting sequence (NMTS) region spans residues 224 to 278 (YYANVSAAKCQEFGRWYKHFKKTKDMMVEMDSLSELSQQGANHVNFGQQPVPGNT). The span at 266–296 (HVNFGQQPVPGNTAEQPPSPAQLSHGSQPSV) shows a compositional bias: polar residues. Residues 266–307 (HVNFGQQPVPGNTAEQPPSPAQLSHGSQPSVRTPLPNLHPGL) form a disordered region. 2 consecutive DNA-binding regions (CUT) follow at residues 361–448 (LEQQ…QDER) and 484–571 (NGKP…EQES). DNA-binding positions include glutamine 390, 400 to 410 (RTQGLLSEILR), and asparagine 425. Residues 591-607 (QIQQQQQQQQQQQQQQQ) show a composition bias toward low complexity. The interval 591-649 (QIQQQQQQQQQQQQQQQAPPPPQPQQQPQTGPRLPPRQPTVASPAESDEENRQKTRPRT) is disordered. Serine 637 carries the phosphoserine modification. A DNA-binding region (homeobox) is located at residues 645–704 (TRPRTKISVEALGILQSFIQDVGLYPDEEAIQTLSAQLDLPKYTIIKFFQNQRYYLKHHG). A Glycyl lysine isopeptide (Lys-Gly) (interchain with G-Cter in SUMO) cross-link involves residue lysine 744.

It belongs to the CUT homeobox family. In terms of assembly, interacts with CUX1 (via DNA-binding domains); the interaction inhibits the attachment of both proteins to DNA. Homodimer. Part of the nuclear protein complex gamma-globin promoter and enhancer binding factor (gamma-PE) composed at least of SATB1 and HOXB2. Interaction with CtBP1 when not acetylated stabilizes attachment to DNA and promotes transcription repression. Interacts with PCAF. Interacts with sumoylated PML and HDAC1 via the CMP domain. Interacts also with DYNLT3 and POLR2J2. Binds to EP300. (Microbial infection) Interacts (via the CMP domain) with HIV-1 Tat. Sumoylated. Sumoylation promotes cleavage by caspases. In terms of processing, phosphorylated by PKC. Acetylated by PCAF. Phosphorylated form interacts with HDAC1, but unphosphorylated form interacts with PCAF. DNA binding properties are activated by phosphorylation and inactivated by acetylation. In opposition, gene expression is down-regulated by phosphorylation but up-regulated by acetylation. Post-translationally, cleaved at Asp-254 by caspase-3 and caspase-6 during T-cell apoptosis in thymus and during B-cell stimulation. The cleaved forms cannot dimerize and lose transcription regulation function because of impaired DNA and chromatin association. Expressed predominantly in thymus.

It is found in the nucleus matrix. The protein localises to the nucleus. Its subcellular location is the PML body. Functionally, crucial silencing factor contributing to the initiation of X inactivation mediated by Xist RNA that occurs during embryogenesis and in lymphoma. Binds to DNA at special AT-rich sequences, the consensus SATB1-binding sequence (CSBS), at nuclear matrix- or scaffold-associated regions. Thought to recognize the sugar-phosphate structure of double-stranded DNA. Transcriptional repressor controlling nuclear and viral gene expression in a phosphorylated and acetylated status-dependent manner, by binding to matrix attachment regions (MARs) of DNA and inducing a local chromatin-loop remodeling. Acts as a docking site for several chromatin remodeling enzymes (e.g. PML at the MHC-I locus) and also by recruiting corepressors (HDACs) or coactivators (HATs) directly to promoters and enhancers. Modulates genes that are essential in the maturation of the immune T-cell CD8SP from thymocytes. Required for the switching of fetal globin species, and beta- and gamma-globin genes regulation during erythroid differentiation. Plays a role in chromatin organization and nuclear architecture during apoptosis. Interacts with the unique region (UR) of cytomegalovirus (CMV). Alu-like motifs and SATB1-binding sites provide a unique chromatin context which seems preferentially targeted by the HIV-1 integration machinery. Moreover, HIV-1 Tat may overcome SATB1-mediated repression of IL2 and IL2RA (interleukin) in T-cells by binding to the same domain than HDAC1. Delineates specific epigenetic modifications at target gene loci, directly up-regulating metastasis-associated genes while down-regulating tumor-suppressor genes. Reprograms chromatin organization and the transcription profiles of breast tumors to promote growth and metastasis. Promotes neuronal differentiation of neural stem/progenitor cells in the adult subventricular zone, possibly by positively regulating the expression of NEUROD1. This is DNA-binding protein SATB1 from Homo sapiens (Human).